The following is a 63-amino-acid chain: Sarcotoxin-1A (63 aa).

Residues 1–23 (MNFQNIFIFVALILAVFAGQSQA) form the signal peptide. Residue R62 is modified to Arginine amide.

The protein belongs to the cecropin family.

It is found in the secreted. In terms of biological role, sarcotoxins, which are potent bactericidal proteins, are produced in response to injury. They are cytotoxic to both Gram-positive and Gram-negative bacteria. The polypeptide is Sarcotoxin-1A (Sarcophaga peregrina (Flesh fly)).